A 390-amino-acid chain; its full sequence is Flagellar P-ring protein (390 aa).

The signal sequence occupies residues 1–36 (MFFSRKIRSLLLTPKRRWSLILTLCLIFTGINFSTS).

It belongs to the FlgI family. In terms of assembly, the basal body constitutes a major portion of the flagellar organelle and consists of four rings (L,P,S, and M) mounted on a central rod.

The protein resides in the periplasm. It localises to the bacterial flagellum basal body. Assembles around the rod to form the L-ring and probably protects the motor/basal body from shearing forces during rotation. This is Flagellar P-ring protein from Desulfotalea psychrophila (strain LSv54 / DSM 12343).